We begin with the raw amino-acid sequence, 365 residues long: NAD(P)H-quinone oxidoreductase subunit 1, chloroplastic (365 aa).

8 helical membrane-spanning segments follow: residues 27–47, 98–118, 129–149, 165–185, 203–223, 253–273, 302–322, and 345–365; these read VWIF…VLVI, FSIG…VIPF, IGIF…LMSG, AAQS…ISLL, FWGW…ISSL, FGLF…FVTI, IFGT…FLFI, and FLLP…LFSL.

It belongs to the complex I subunit 1 family. In terms of assembly, NDH is composed of at least 16 different subunits, 5 of which are encoded in the nucleus.

It localises to the plastid. The protein resides in the chloroplast thylakoid membrane. It carries out the reaction a plastoquinone + NADH + (n+1) H(+)(in) = a plastoquinol + NAD(+) + n H(+)(out). It catalyses the reaction a plastoquinone + NADPH + (n+1) H(+)(in) = a plastoquinol + NADP(+) + n H(+)(out). Its function is as follows. NDH shuttles electrons from NAD(P)H:plastoquinone, via FMN and iron-sulfur (Fe-S) centers, to quinones in the photosynthetic chain and possibly in a chloroplast respiratory chain. The immediate electron acceptor for the enzyme in this species is believed to be plastoquinone. Couples the redox reaction to proton translocation, and thus conserves the redox energy in a proton gradient. The protein is NAD(P)H-quinone oxidoreductase subunit 1, chloroplastic of Arabis hirsuta (Hairy rock-cress).